The following is a 258-amino-acid chain: UPF0246 protein YaaA (258 aa).

Belongs to the UPF0246 family.

This Escherichia coli (strain UTI89 / UPEC) protein is UPF0246 protein YaaA.